The following is a 653-amino-acid chain: Alpha-L-iduronidase (653 aa).

The N-terminal stretch at 1 to 27 is a signal peptide; the sequence is MRPLRPRAALLALLASLLAAPPVAPAE. Alpha-D-mannopyranose is bound by residues P54, L56, and H58. Alpha-L-iduronate is bound at residue H91. N110 carries an N-linked (GlcNAc...) asparagine glycan. Alpha-L-iduronate is bound by residues N181 and E182. E182 acts as the Proton donor in catalysis. N190 carries N-linked (GlcNAc...) asparagine glycosylation. Alpha-L-iduronate is bound by residues K264, E299, and G305. The active-site Nucleophile is E299. W306 contacts alpha-D-mannopyranose. N336 carries an N-linked (GlcNAc...) asparagine glycan. Residues D349 and R363 each contribute to the alpha-L-iduronate site. N372, N415, and N451 each carry an N-linked (GlcNAc...) asparagine glycan. Residues R488 and R492 each contribute to the alpha-D-mannopyranose site. Beta-D-mannose is bound at residue R492. The cysteines at positions 541 and 577 are disulfide-linked.

It belongs to the glycosyl hydrolase 39 family. Monomer. In terms of processing, N-glycosylation at Asn-372 contributes to substrate binding and is required for full enzymatic activity. In terms of tissue distribution, ubiquitous.

Its subcellular location is the lysosome. It carries out the reaction Hydrolysis of unsulfated alpha-L-iduronosidic linkages in dermatan sulfate.. In Homo sapiens (Human), this protein is Alpha-L-iduronidase (IDUA).